We begin with the raw amino-acid sequence, 687 residues long: Putative lipase YDR444W (687 aa).

The Charge relay system role is filled by Ser-284. 3 disordered regions span residues 429-472 (IRKK…AESP), 491-513 (KINK…EQGV), and 650-687 (ELAE…ENAT). A compositionally biased stretch (low complexity) spans 436–463 (SPTSSEFVSSDSPESSGASSPSNENGNN). Positions 670–681 (RSNEYNEGEISK) are enriched in basic and acidic residues.

This sequence belongs to the putative lipase ROG1 family.

It is found in the cytoplasm. This chain is Putative lipase YDR444W, found in Saccharomyces cerevisiae (strain ATCC 204508 / S288c) (Baker's yeast).